Consider the following 857-residue polypeptide: Protein argonaute-1 (857 aa).

A PAZ domain is found at 227-346 (PVIEFMCEVL…LPLEVCNIVA (120 aa)). 2 interaction with guide RNA regions span residues 309 to 314 (YFKQKY) and 522 to 564 (GKTP…LCLK). Residues 515-816 (LIIVILPGKT…VAFRARYHLV (302 aa)) form the Piwi domain. Positions 670 to 675 (PEGQLP) are impairs access of bound RNA to the active site. Interaction with guide RNA stretches follow at residues 708 to 712 (RHHTR), 751 to 759 (HAGIQGTSR), and 788 to 813 (YVRC…RARY).

It belongs to the argonaute family. Ago subfamily. Interacts with DDB1, DDX5, DDX6, DHX30, DHX36, DDX47, DICER1, AGO2, ELAVL1, HNRNPF, IGF2BP1, ILF3, IMP8, MATR3, MOV10, PABPC1, PRMT5, RBM4, SART3, TNRC6B, UPF1 and YBX1. Associates with polysomes and messenger ribonucleoproteins (mNRPs). Interacts with LIMD1, WTIP and AJUBA. Interacts with APOBEC3F, APOBEC3G and APOBEC3H. Post-translationally, ubiquitinated on surface-exposed lysines by a SCF-like E3 ubiquitin-protein ligase complex containing ZSWIM8 during target-directed microRNA degradation (TDMD), a process that mediates degradation of microRNAs (miRNAs). Ubiquitination by the SCF-like E3 ubiquitin-protein ligase complex containing ZSWIM8 leads to its subsequent degradation, thereby exposing miRNAs for degradation. ZSWIM8 recognizes and binds AGO1 when it is engaged with a TDMD target.

The protein resides in the cytoplasm. It localises to the P-body. Its function is as follows. Required for RNA-mediated gene silencing (RNAi). Binds to short RNAs such as microRNAs (miRNAs) or short interfering RNAs (siRNAs), and represses the translation of mRNAs which are complementary to them. Lacks endonuclease activity and does not appear to cleave target mRNAs. Also required for transcriptional gene silencing (TGS) of promoter regions which are complementary to bound short antigene RNAs (agRNAs). This Homo sapiens (Human) protein is Protein argonaute-1 (AGO1).